The chain runs to 353 residues: S-adenosylmethionine:tRNA ribosyltransferase-isomerase (353 aa).

It belongs to the QueA family. Monomer.

Its subcellular location is the cytoplasm. It catalyses the reaction 7-aminomethyl-7-carbaguanosine(34) in tRNA + S-adenosyl-L-methionine = epoxyqueuosine(34) in tRNA + adenine + L-methionine + 2 H(+). It functions in the pathway tRNA modification; tRNA-queuosine biosynthesis. In terms of biological role, transfers and isomerizes the ribose moiety from AdoMet to the 7-aminomethyl group of 7-deazaguanine (preQ1-tRNA) to give epoxyqueuosine (oQ-tRNA). The polypeptide is S-adenosylmethionine:tRNA ribosyltransferase-isomerase (Paraburkholderia phymatum (strain DSM 17167 / CIP 108236 / LMG 21445 / STM815) (Burkholderia phymatum)).